A 552-amino-acid polypeptide reads, in one-letter code: Glutamate--tRNA ligase (552 aa).

A 'HIGH' region motif is present at residues 102–112; that stretch reads PNPSGPLHIGH.

Belongs to the class-I aminoacyl-tRNA synthetase family. Glutamate--tRNA ligase type 2 subfamily.

It localises to the cytoplasm. It catalyses the reaction tRNA(Glu) + L-glutamate + ATP = L-glutamyl-tRNA(Glu) + AMP + diphosphate. Functionally, catalyzes the attachment of glutamate to tRNA(Glu) in a two-step reaction: glutamate is first activated by ATP to form Glu-AMP and then transferred to the acceptor end of tRNA(Glu). This chain is Glutamate--tRNA ligase, found in Methanothermobacter marburgensis (strain ATCC BAA-927 / DSM 2133 / JCM 14651 / NBRC 100331 / OCM 82 / Marburg) (Methanobacterium thermoautotrophicum).